Consider the following 399-residue polypeptide: UDP-galactopyranose mutase (399 aa).

Residues Ser-25, 44–45, Asn-52, and 71–72 each bind FAD; these read EK and HI. Positions 171, 175, 200, 297, 306, and 345 each coordinate UDP-alpha-D-galactose. Residue Arg-374 coordinates FAD. Tyr-380 is a UDP-alpha-D-galactose binding site. 381 to 386 is a binding site for FAD; it reads IDMDRA.

The protein belongs to the UDP-galactopyranose/dTDP-fucopyranose mutase family. FAD serves as cofactor.

The catalysed reaction is UDP-alpha-D-galactose = UDP-alpha-D-galactofuranose. In terms of biological role, involved in the conversion of UDP-GalP into UDP-GalF through a 2-keto intermediate. This is UDP-galactopyranose mutase (glf) from Mycoplasma pneumoniae (strain ATCC 29342 / M129 / Subtype 1) (Mycoplasmoides pneumoniae).